We begin with the raw amino-acid sequence, 156 residues long: ATP synthase subunit b (156 aa).

A helical membrane pass occupies residues 11–31 (AIAFILFVWFCMKYVWPPLMA).

The protein belongs to the ATPase B chain family. F-type ATPases have 2 components, F(1) - the catalytic core - and F(0) - the membrane proton channel. F(1) has five subunits: alpha(3), beta(3), gamma(1), delta(1), epsilon(1). F(0) has three main subunits: a(1), b(2) and c(10-14). The alpha and beta chains form an alternating ring which encloses part of the gamma chain. F(1) is attached to F(0) by a central stalk formed by the gamma and epsilon chains, while a peripheral stalk is formed by the delta and b chains.

It is found in the cell inner membrane. F(1)F(0) ATP synthase produces ATP from ADP in the presence of a proton or sodium gradient. F-type ATPases consist of two structural domains, F(1) containing the extramembraneous catalytic core and F(0) containing the membrane proton channel, linked together by a central stalk and a peripheral stalk. During catalysis, ATP synthesis in the catalytic domain of F(1) is coupled via a rotary mechanism of the central stalk subunits to proton translocation. In terms of biological role, component of the F(0) channel, it forms part of the peripheral stalk, linking F(1) to F(0). The polypeptide is ATP synthase subunit b (Salmonella agona (strain SL483)).